Consider the following 41-residue polypeptide: Large ribosomal subunit protein bL36 (41 aa).

The protein belongs to the bacterial ribosomal protein bL36 family.

This Mesorhizobium japonicum (strain LMG 29417 / CECT 9101 / MAFF 303099) (Mesorhizobium loti (strain MAFF 303099)) protein is Large ribosomal subunit protein bL36.